Consider the following 446-residue polypeptide: UDP-N-acetylmuramoylalanine--D-glutamate ligase (446 aa).

Residue 115–121 (GTNGKTT) participates in ATP binding.

It belongs to the MurCDEF family.

The protein localises to the cytoplasm. The enzyme catalyses UDP-N-acetyl-alpha-D-muramoyl-L-alanine + D-glutamate + ATP = UDP-N-acetyl-alpha-D-muramoyl-L-alanyl-D-glutamate + ADP + phosphate + H(+). It functions in the pathway cell wall biogenesis; peptidoglycan biosynthesis. Functionally, cell wall formation. Catalyzes the addition of glutamate to the nucleotide precursor UDP-N-acetylmuramoyl-L-alanine (UMA). This Pelobacter propionicus (strain DSM 2379 / NBRC 103807 / OttBd1) protein is UDP-N-acetylmuramoylalanine--D-glutamate ligase.